The chain runs to 113 residues: Putative anti-sigma factor antagonist TM1081 homolog (113 aa).

The STAS domain maps to 1 to 110; sequence MFPYKIVEDV…DTISEALEEV (110 aa). At S55 the chain carries Phosphoserine.

Belongs to the anti-sigma-factor antagonist family. Phosphorylated on a serine residue.

In the phosphorylated form it could act as an anti-anti-sigma factor that counteracts an anti-sigma factor and thus releases a sigma factor from inhibition. The polypeptide is Putative anti-sigma factor antagonist TM1081 homolog (Thermotoga neapolitana).